Reading from the N-terminus, the 344-residue chain is Dihydroorotase (344 aa).

Residues histidine 14 and histidine 16 each contribute to the Zn(2+) site. Residues 16-18 (HLR) and asparagine 42 each bind substrate. Residues lysine 100, histidine 137, and histidine 175 each contribute to the Zn(2+) site. Lysine 100 carries the N6-carboxylysine modification. Substrate is bound at residue histidine 137. Leucine 220 contributes to the substrate binding site. Aspartate 248 serves as a coordination point for Zn(2+). Residue aspartate 248 is part of the active site. Positions 252 and 264 each coordinate substrate.

Belongs to the metallo-dependent hydrolases superfamily. DHOase family. Class II DHOase subfamily. Homodimer. Requires Zn(2+) as cofactor.

It carries out the reaction (S)-dihydroorotate + H2O = N-carbamoyl-L-aspartate + H(+). Its pathway is pyrimidine metabolism; UMP biosynthesis via de novo pathway; (S)-dihydroorotate from bicarbonate: step 3/3. Its function is as follows. Catalyzes the reversible cyclization of carbamoyl aspartate to dihydroorotate. The sequence is that of Dihydroorotase from Ralstonia pickettii (strain 12J).